We begin with the raw amino-acid sequence, 292 residues long: tRNA pseudouridine synthase B (292 aa).

D40 acts as the Nucleophile in catalysis.

The protein belongs to the pseudouridine synthase TruB family. Type 1 subfamily.

The enzyme catalyses uridine(55) in tRNA = pseudouridine(55) in tRNA. In terms of biological role, responsible for synthesis of pseudouridine from uracil-55 in the psi GC loop of transfer RNAs. The chain is tRNA pseudouridine synthase B from Mycoplasma capricolum subsp. capricolum (strain California kid / ATCC 27343 / NCTC 10154).